A 157-amino-acid polypeptide reads, in one-letter code: Endoribonuclease YbeY (157 aa).

The Zn(2+) site is built by H118, H122, and H128.

Belongs to the endoribonuclease YbeY family. Zn(2+) serves as cofactor.

The protein localises to the cytoplasm. Functionally, single strand-specific metallo-endoribonuclease involved in late-stage 70S ribosome quality control and in maturation of the 3' terminus of the 16S rRNA. This chain is Endoribonuclease YbeY, found in Bordetella bronchiseptica (strain ATCC BAA-588 / NCTC 13252 / RB50) (Alcaligenes bronchisepticus).